The sequence spans 247 residues: Cell division protein ZapD (247 aa).

Belongs to the ZapD family. Interacts with FtsZ.

It localises to the cytoplasm. Its function is as follows. Cell division factor that enhances FtsZ-ring assembly. Directly interacts with FtsZ and promotes bundling of FtsZ protofilaments, with a reduction in FtsZ GTPase activity. In Shigella sonnei (strain Ss046), this protein is Cell division protein ZapD.